The following is a 60-amino-acid chain: MAVPKQKRSRSRTHHKRVKIYRPIKVAVSVCPNCGEPKEPHRVCLHCGYYGGKQILEIGE.

It belongs to the bacterial ribosomal protein bL32 family.

The chain is Large ribosomal subunit protein bL32 from Kosmotoga olearia (strain ATCC BAA-1733 / DSM 21960 / TBF 19.5.1).